Consider the following 100-residue polypeptide: Sodium-influx-stimulating peptide (100 aa).

A signal peptide spans methionine 1–serine 23.

Three disulfide bonds are present. As to expression, expressed by the yellow cells, peptidergic (neuroendocrine) neurons of the central nervous system.

Its function is as follows. Stimulates integumental Na(+) uptake. Controls the activity of sodium pumps in the integument, pericardium, ureter and nephridial gland. This Lymnaea stagnalis (Great pond snail) protein is Sodium-influx-stimulating peptide (SIS).